A 130-amino-acid chain; its full sequence is Small ribosomal subunit protein uS9 (130 aa).

It belongs to the universal ribosomal protein uS9 family.

The protein is Small ribosomal subunit protein uS9 of Shigella sonnei (strain Ss046).